A 173-amino-acid polypeptide reads, in one-letter code: UPF0102 protein Psyc_1908 (173 aa).

The protein belongs to the UPF0102 family.

The protein is UPF0102 protein Psyc_1908 of Psychrobacter arcticus (strain DSM 17307 / VKM B-2377 / 273-4).